Consider the following 223-residue polypeptide: Dephospho-CoA kinase (223 aa).

Positions 22–223 constitute a DPCK domain; that stretch reads LIGLSGPSCS…LLQEVKKRGF (202 aa). 30-35 contacts ATP; sequence CSGKNT.

The protein belongs to the CoaE family.

The protein resides in the cytoplasm. The catalysed reaction is 3'-dephospho-CoA + ATP = ADP + CoA + H(+). The protein operates within cofactor biosynthesis; coenzyme A biosynthesis; CoA from (R)-pantothenate: step 5/5. Functionally, catalyzes the phosphorylation of the 3'-hydroxyl group of dephosphocoenzyme A to form coenzyme A. The sequence is that of Dephospho-CoA kinase from Treponema denticola (strain ATCC 35405 / DSM 14222 / CIP 103919 / JCM 8153 / KCTC 15104).